A 323-amino-acid polypeptide reads, in one-letter code: Tetraacyldisaccharide 4'-kinase (323 aa).

56–63 (TVGGVGKT) contributes to the ATP binding site.

The protein belongs to the LpxK family.

It catalyses the reaction a lipid A disaccharide + ATP = a lipid IVA + ADP + H(+). It functions in the pathway glycolipid biosynthesis; lipid IV(A) biosynthesis; lipid IV(A) from (3R)-3-hydroxytetradecanoyl-[acyl-carrier-protein] and UDP-N-acetyl-alpha-D-glucosamine: step 6/6. In terms of biological role, transfers the gamma-phosphate of ATP to the 4'-position of a tetraacyldisaccharide 1-phosphate intermediate (termed DS-1-P) to form tetraacyldisaccharide 1,4'-bis-phosphate (lipid IVA). In Legionella pneumophila (strain Lens), this protein is Tetraacyldisaccharide 4'-kinase.